We begin with the raw amino-acid sequence, 64 residues long: Prokaryotic ubiquitin-like protein UBact (64 aa).

2 stretches are compositionally biased toward basic and acidic residues: residues 1-12 and 33-64; these read MSDLFRMEERRQ and PDVK…RSGE. The disordered stretch occupies residues 1-64; that stretch reads MSDLFRMEER…ARRYRQRSGE (64 aa). An Isoglutamyl lysine isopeptide (Glu-Lys) (interchain with K-? in acceptor proteins) cross-link involves residue E64.

It belongs to the ubiquitin-like protein UBact family.

In terms of biological role, may function as a protein modifier covalently attached to lysine residues of substrate proteins. This may serve to target the modified proteins for degradation by proteasomes. The sequence is that of Prokaryotic ubiquitin-like protein UBact from Chthonomonas calidirosea (strain DSM 23976 / ICMP 18418 / T49).